The chain runs to 110 residues: Ig kappa chain V region 2717 (110 aa).

The segment at 1-23 (VEVLTQTPSPVSAAVGGTVTISC) is framework-1. A complementarity-determining-1 region spans residues 24 to 36 (QSTKSIYBBBYLA). The tract at residues 37-51 (WYQZKPGQPPKALIY) is framework-2. Positions 52–58 (TASSLAS) are complementarity-determining-2. The framework-3 stretch occupies residues 59-90 (GVPSRFTGSGSGTZFTLTLSDVZCDDAATYYC). Positions 91-99 (GGADYTGYS) are complementarity-determining-3. The segment at 100 to 109 (FGGGTEVVVK) is framework-4.

This is Ig kappa chain V region 2717 from Oryctolagus cuniculus (Rabbit).